The sequence spans 392 residues: 3-ketoacyl-CoA thiolase (392 aa).

Catalysis depends on cysteine 95, which acts as the Acyl-thioester intermediate. Catalysis depends on proton acceptor residues histidine 347 and cysteine 377.

Belongs to the thiolase-like superfamily. Thiolase family. As to quaternary structure, heterotetramer of two alpha chains (FadB) and two beta chains (FadA).

The protein resides in the cytoplasm. It carries out the reaction an acyl-CoA + acetyl-CoA = a 3-oxoacyl-CoA + CoA. The protein operates within lipid metabolism; fatty acid beta-oxidation. Functionally, catalyzes the final step of fatty acid oxidation in which acetyl-CoA is released and the CoA ester of a fatty acid two carbons shorter is formed. The protein is 3-ketoacyl-CoA thiolase of Chromohalobacter salexigens (strain ATCC BAA-138 / DSM 3043 / CIP 106854 / NCIMB 13768 / 1H11).